The sequence spans 331 residues: DNA-directed RNA polymerase subunit alpha (331 aa).

Residues 1 to 237 are alpha N-terminal domain (alpha-NTD); it reads MQSSVTEFLI…NQLESFVYLR (237 aa). Residues 251 to 331 are alpha C-terminal domain (alpha-CTD); that stretch reads FDPILLRPVD…NWPPDNILDN (81 aa).

Belongs to the RNA polymerase alpha chain family. In terms of assembly, homodimer. The RNAP catalytic core consists of 2 alpha, 1 beta, 1 beta' and 1 omega subunit. When a sigma factor is associated with the core the holoenzyme is formed, which can initiate transcription.

The enzyme catalyses RNA(n) + a ribonucleoside 5'-triphosphate = RNA(n+1) + diphosphate. Functionally, DNA-dependent RNA polymerase catalyzes the transcription of DNA into RNA using the four ribonucleoside triphosphates as substrates. The sequence is that of DNA-directed RNA polymerase subunit alpha from Buchnera aphidicola subsp. Baizongia pistaciae (strain Bp).